The following is a 192-amino-acid chain: Ribosomal RNA large subunit methyltransferase E (192 aa).

S-adenosyl-L-methionine is bound by residues Gly46, Trp48, Asp63, Asp79, and Asp102. Residue Lys142 is the Proton acceptor of the active site.

Belongs to the class I-like SAM-binding methyltransferase superfamily. RNA methyltransferase RlmE family.

It is found in the cytoplasm. The enzyme catalyses uridine(2552) in 23S rRNA + S-adenosyl-L-methionine = 2'-O-methyluridine(2552) in 23S rRNA + S-adenosyl-L-homocysteine + H(+). Functionally, specifically methylates the uridine in position 2552 of 23S rRNA at the 2'-O position of the ribose in the fully assembled 50S ribosomal subunit. In Wolbachia pipientis wMel, this protein is Ribosomal RNA large subunit methyltransferase E.